A 283-amino-acid chain; its full sequence is Elongation factor Ts (283 aa).

The segment at 79–82 (TDFV) is involved in Mg(2+) ion dislocation from EF-Tu.

The protein belongs to the EF-Ts family.

It localises to the cytoplasm. Functionally, associates with the EF-Tu.GDP complex and induces the exchange of GDP to GTP. It remains bound to the aminoacyl-tRNA.EF-Tu.GTP complex up to the GTP hydrolysis stage on the ribosome. The chain is Elongation factor Ts from Shewanella frigidimarina (strain NCIMB 400).